Reading from the N-terminus, the 356-residue chain is Protein RecA (356 aa).

68–75 contacts ATP; that stretch reads GQESSGKT.

This sequence belongs to the RecA family.

Its subcellular location is the cytoplasm. Functionally, can catalyze the hydrolysis of ATP in the presence of single-stranded DNA, the ATP-dependent uptake of single-stranded DNA by duplex DNA, and the ATP-dependent hybridization of homologous single-stranded DNAs. It interacts with LexA causing its activation and leading to its autocatalytic cleavage. In Thermotoga maritima (strain ATCC 43589 / DSM 3109 / JCM 10099 / NBRC 100826 / MSB8), this protein is Protein RecA.